We begin with the raw amino-acid sequence, 1408 residues long: Palladin (1408 aa).

A disordered region spans residues 69–229 (SKSPISLCET…SASQSPTADQ (161 aa)). 2 stretches are compositionally biased toward polar residues: residues 149 to 169 (PNPS…QSQL) and 193 to 229 (RSPN…TADQ). Phosphoserine is present on Ser-194. Ig-like C2-type domains lie at 278-367 (PRFI…AEVF) and 448-546 (PVFT…LVIT). Disulfide bonds link Cys-299/Cys-351 and Cys-469/Cys-528. Residues 569 to 573 (FPPPP) form an interaction with VASP region. 2 disordered regions span residues 631 to 660 (NGKA…LAKP) and 687 to 727 (PPGV…VPSE). Ser-639 is subject to Phosphoserine. Position 642 is a phosphothreonine (Thr-642). Ser-648 is subject to Phosphoserine. An interaction with LASP1 region spans residues 653-683 (PPPLLAKPKLDPLKLQQLQNQVRLEQEACAW). The interval 683–713 (WPPAPPGVPCNSSSSGSSAPPSPPFPPPPPA) is interaction with SORBS2, SPIN90 and SRC. Positions 691–701 (PCNSSSSGSSA) are enriched in low complexity. Phosphoserine occurs at positions 700, 704, and 744. Over residues 702 to 714 (PPSPPFPPPPPAF) the composition is skewed to pro residues. 3 disordered regions span residues 758 to 854 (NLGP…RFGP), 882 to 904 (KGVT…SDEE), and 960 to 981 (ETAA…LDGQ). Positions 765-779 (LPTPTSSPSSSSLPS) are enriched in low complexity. Composition is skewed to pro residues over residues 780–797 (PLSP…PPFV), 807–818 (SPSPPPPPPPVF), and 828–840 (DVFP…PPLP). The interaction with EPS8 stretch occupies residues 782–842 (SPTPRPFGRA…PPPPPPLPSS (61 aa)). Residues 807 to 842 (SPSPPPPPPPVFSPSAAYPVPDVFPLPPPPPPLPSS) form an interaction with SORBS2, SPIN90, SRC and PFN1 region. The tract at residues 830-834 (FPLPP) is interaction with VASP. Position 901 is a phosphoserine (Ser-901). 2 positions are modified to phosphoserine: Ser-1004 and Ser-1009. The Ig-like C2-type 3 domain maps to 1026–1110 (PFFEMKLKHY…MAANPQGRVS (85 aa)). The tract at residues 1121–1150 (NQRGRSPRSPSGHPHARRPRSRSRDSGDEN) is disordered. Positions 1123–1133 (RGRSPRSPSGH) are enriched in low complexity. Ser-1126, Ser-1129, Ser-1131, and Ser-1141 each carry phosphoserine. Ser-1143 is subject to Phosphoserine; by PKB/AKT1. Ser-1146 carries the post-translational modification Phosphoserine. Ig-like C2-type domains lie at 1160-1251 (PHFL…LVVA) and 1259-1349 (PVFM…ARLD). Interaction with EZR stretches follow at residues 1162–1251 (FLQA…LVVA) and 1261–1351 (FMEK…LDVY). A disulfide bond links Cys-1181 and Cys-1233. Phosphoserine is present on Ser-1377.

Belongs to the myotilin/palladin family. As to quaternary structure, interacts with EPS8. Interacts with LASP1. Interacts with VASP. Interacts with ACTN. Interacts with SORBS2. Interacts with PFN1. Interacts with LPP. Interacts with SPIN90. Interacts with SRC. Interacts with EZR. Interacts with RAI14. Phosphorylated predominantly on serines and, to a lesser extent, on tyrosines. Phosphorylation at Ser-1143 by PKB/AKT1 modulates cytoskeletal organization and cell motility. As to expression, detected in both muscle and non-muscle tissues and cells (at protein level). Isoform 3 is widely expressed, isoform 4 is particularly abundant in tissues rich in smooth muscle and in the cardiac muscle and isoform 1 is detected in heart.

It is found in the cytoplasm. It localises to the cytoskeleton. Its subcellular location is the cell junction. The protein localises to the focal adhesion. The protein resides in the myofibril. It is found in the sarcomere. It localises to the z line. Its subcellular location is the cell projection. The protein localises to the ruffle. The protein resides in the podosome. It is found in the lamellipodium. It localises to the axon. Its subcellular location is the growth cone. Cytoskeletal protein required for organization of normal actin cytoskeleton. Roles in establishing cell morphology, motility, cell adhesion and cell-extracellular matrix interactions in a variety of cell types. May function as a scaffolding molecule with the potential to influence both actin polymerization and the assembly of existing actin filaments into higher-order arrays. Binds to proteins that bind to either monomeric or filamentous actin. Localizes at sites where active actin remodeling takes place, such as lamellipodia and membrane ruffles. Different isoforms may have functional differences. Involved in the control of morphological and cytoskeletal changes associated with dendritic cell maturation. Involved in targeting ACTN to specific subcellular locations. May be required for the initiation of neural tube closure. The sequence is that of Palladin (Palld) from Mus musculus (Mouse).